The sequence spans 399 residues: Elongation factor Tu (399 aa).

A tr-type G domain is found at 10–204; sequence KDHVNIGTIG…AVDDYIDTPE (195 aa). The segment at 19-26 is G1; it reads GHVDHGKT. Position 19–26 (19–26) interacts with GTP; that stretch reads GHVDHGKT. Thr26 is a binding site for Mg(2+). The interval 60–64 is G2; it reads GITIN. The segment at 81–84 is G3; the sequence is DCPG. Residues 81-85 and 136-139 contribute to the GTP site; these read DCPGH and NKKD. Residues 136–139 form a G4 region; sequence NKKD. Positions 174–176 are G5; that stretch reads SAL.

The protein belongs to the TRAFAC class translation factor GTPase superfamily. Classic translation factor GTPase family. EF-Tu/EF-1A subfamily. As to quaternary structure, monomer.

The protein resides in the cytoplasm. The enzyme catalyses GTP + H2O = GDP + phosphate + H(+). In terms of biological role, GTP hydrolase that promotes the GTP-dependent binding of aminoacyl-tRNA to the A-site of ribosomes during protein biosynthesis. The protein is Elongation factor Tu of Synechocystis sp. (strain ATCC 27184 / PCC 6803 / Kazusa).